The following is a 205-amino-acid chain: Transcription termination/antitermination protein NusG (205 aa).

The KOW domain maps to 154–178 (GDHIMVLSGPFKDFEGDVIEVSPER).

This sequence belongs to the NusG family.

Functionally, participates in transcription elongation, termination and antitermination. The protein is Transcription termination/antitermination protein NusG of Synechocystis sp. (strain ATCC 27184 / PCC 6803 / Kazusa).